The following is a 260-amino-acid chain: Carbonic anhydrase 3 (260 aa).

Position 2 is an N-acetylalanine (Ala-2). The 257-residue stretch at 3 to 259 (KEWGYASHNG…VKGRVVRASF (257 aa)) folds into the Alpha-carbonic anhydrase domain. 5 positions are modified to phosphoserine: Ser-29, Ser-43, Ser-48, Ser-50, and Ser-55. The segment at 64–67 (KTCR) is involved in proton transfer. Thr-73 is modified (phosphothreonine). Residues His-94, His-96, and His-119 each coordinate Zn(2+). Tyr-127 carries the post-translational modification Phosphotyrosine. Phosphothreonine occurs at positions 129 and 176. 2 positions are modified to S-glutathionyl cysteine: Cys-182 and Cys-187. 198 to 199 (TT) contributes to the substrate binding site. Thr-216 bears the Phosphothreonine mark. Residue Ser-219 is modified to Phosphoserine.

The protein belongs to the alpha-carbonic anhydrase family. Zn(2+) is required as a cofactor. In terms of processing, S-thiolated both by thiol-disulfide exchange with glutathione disulfide and by oxyradical-initiated S-thiolation with reduced glutathione. S-glutathionylated in hepatocytes under oxidative stress. In terms of tissue distribution, expressed at lower levels in adipose tissue from animals that were either genetically obese or had experimentally induced obesity.

The protein localises to the cytoplasm. It catalyses the reaction hydrogencarbonate + H(+) = CO2 + H2O. With respect to regulation, inhibited by acetazolamide. Functionally, reversible hydration of carbon dioxide. The polypeptide is Carbonic anhydrase 3 (Mus musculus (Mouse)).